A 94-amino-acid chain; its full sequence is Non-specific lipid-transfer protein 1 (94 aa).

Intrachain disulfides connect Cys4-Cys53, Cys14-Cys30, Cys31-Cys76, and Cys51-Cys90.

Its function is as follows. Plant non-specific lipid-transfer proteins transfer phospholipids as well as galactolipids across membranes. May play a role in wax or cutin deposition in the cell walls of expanding epidermal cells and certain secretory tissues. This chain is Non-specific lipid-transfer protein 1, found in Amaranthus hypochondriacus (Prince-of-Wales feather).